Reading from the N-terminus, the 288-residue chain is 5,10-methylenetetrahydrofolate reductase (288 aa).

The FAD site is built by Ala-51, His-73, Gly-106, Asp-107, Ala-118, Tyr-140, His-144, and Lys-159. Asp-107 is a binding site for (6S)-5-methyl-5,6,7,8-tetrahydrofolate. A (6S)-5-methyl-5,6,7,8-tetrahydrofolate-binding site is contributed by Gln-175. Gln-175 lines the NADH pocket.

It belongs to the methylenetetrahydrofolate reductase family. Requires FAD as cofactor.

It catalyses the reaction (6S)-5-methyl-5,6,7,8-tetrahydrofolate + NAD(+) = (6R)-5,10-methylene-5,6,7,8-tetrahydrofolate + NADH + H(+). It functions in the pathway one-carbon metabolism; tetrahydrofolate interconversion. Its pathway is amino-acid biosynthesis; L-methionine biosynthesis via de novo pathway. Its function is as follows. Catalyzes the NADH-dependent reduction of 5,10-methylenetetrahydrofolate to 5-methyltetrahydrofolate. Is required to provide the methyl group necessary for methionine synthetase to convert homocysteine to methionine; the methyl group is given by 5-methyltetrahydrofolate. Is required for Sphingobium SYK-6 to grow on vanillate or syringate as the sole source of carbon. The polypeptide is 5,10-methylenetetrahydrofolate reductase (Sphingobium sp. (strain NBRC 103272 / SYK-6)).